Reading from the N-terminus, the 109-residue chain is Class I hydrophobin 18 (109 aa).

A signal peptide spans 1 to 20 (MFTEQVLNVIILLQTATVTA). 4 disulfide bridges follow: C28-C88, C35-C82, C36-C69, and C89-C102. Residues N91 and N106 are each glycosylated (N-linked (GlcNAc...) asparagine).

This sequence belongs to the fungal hydrophobin family. As to quaternary structure, self-assembles to form functional amyloid fibrils called rodlets. Self-assembly into fibrillar rodlets occurs spontaneously at hydrophobic:hydrophilic interfaces and the rodlets further associate laterally to form amphipathic monolayers.

It is found in the secreted. The protein resides in the cell wall. Functionally, aerial growth, conidiation, and dispersal of filamentous fungi in the environment rely upon a capability of their secreting small amphipathic proteins called hydrophobins (HPBs) with low sequence identity. Class I can self-assemble into an outermost layer of rodlet bundles on aerial cell surfaces, conferring cellular hydrophobicity that supports fungal growth, development and dispersal; whereas Class II form highly ordered films at water-air interfaces through intermolecular interactions but contribute nothing to the rodlet structure. This is Class I hydrophobin 18 from Pleurotus ostreatus (strain PC15) (Oyster mushroom).